A 125-amino-acid chain; its full sequence is Fumarate reductase subunit D (125 aa).

Helical transmembrane passes span 30–50, 62–82, and 105–125; these read FAMLTPITVLVLGILVPLGVI, AFATSIIGALFIIGTLALPMW, and VACYAFAGLITALAVIFIFMI.

Belongs to the FrdD family. In terms of assembly, part of an enzyme complex containing four subunits: a flavoprotein (FrdA), an iron-sulfur protein (FrdB), and two hydrophobic anchor proteins (FrdC and FrdD).

Its subcellular location is the cell inner membrane. Its function is as follows. Anchors the catalytic components of the fumarate reductase complex to the cell membrane, binds quinones. The protein is Fumarate reductase subunit D of Vibrio parahaemolyticus serotype O3:K6 (strain RIMD 2210633).